Consider the following 159-residue polypeptide: 6,7-dimethyl-8-ribityllumazine synthase (159 aa).

Residues tryptophan 30, 64–66, and 88–90 each bind 5-amino-6-(D-ribitylamino)uracil; these read TFE and CVI. Residue 93–94 coordinates (2S)-2-hydroxy-3-oxobutyl phosphate; the sequence is ET. Histidine 96 serves as the catalytic Proton donor. A 5-amino-6-(D-ribitylamino)uracil-binding site is contributed by phenylalanine 121. (2S)-2-hydroxy-3-oxobutyl phosphate is bound at residue arginine 135.

It belongs to the DMRL synthase family.

It carries out the reaction (2S)-2-hydroxy-3-oxobutyl phosphate + 5-amino-6-(D-ribitylamino)uracil = 6,7-dimethyl-8-(1-D-ribityl)lumazine + phosphate + 2 H2O + H(+). The protein operates within cofactor biosynthesis; riboflavin biosynthesis; riboflavin from 2-hydroxy-3-oxobutyl phosphate and 5-amino-6-(D-ribitylamino)uracil: step 1/2. Its function is as follows. Catalyzes the formation of 6,7-dimethyl-8-ribityllumazine by condensation of 5-amino-6-(D-ribitylamino)uracil with 3,4-dihydroxy-2-butanone 4-phosphate. This is the penultimate step in the biosynthesis of riboflavin. The protein is 6,7-dimethyl-8-ribityllumazine synthase of Cytophaga hutchinsonii (strain ATCC 33406 / DSM 1761 / CIP 103989 / NBRC 15051 / NCIMB 9469 / D465).